A 323-amino-acid polypeptide reads, in one-letter code: DNA-directed RNA polymerase subunit alpha (323 aa).

Positions 1-233 (MGQEKVTVST…DLFIPFFHAE (233 aa)) are alpha N-terminal domain (alpha-NTD). The interval 264–323 (IALKYIYIDQSELPPRVYNCLKRSNINTFLELLNNSQEELMKIQDFRIEDVKHILDVLEI) is alpha C-terminal domain (alpha-CTD).

It belongs to the RNA polymerase alpha chain family. As to quaternary structure, in plastids the minimal PEP RNA polymerase catalytic core is composed of four subunits: alpha, beta, beta', and beta''. When a (nuclear-encoded) sigma factor is associated with the core the holoenzyme is formed, which can initiate transcription.

It is found in the plastid. The protein resides in the chloroplast. The enzyme catalyses RNA(n) + a ribonucleoside 5'-triphosphate = RNA(n+1) + diphosphate. Functionally, DNA-dependent RNA polymerase catalyzes the transcription of DNA into RNA using the four ribonucleoside triphosphates as substrates. The sequence is that of DNA-directed RNA polymerase subunit alpha from Morus indica (Mulberry).